The chain runs to 67 residues: Ranatuerin-2Vb (67 aa).

The N-terminal stretch at 1-22 (MFTLKKSFLLLFFLGTITLSLC) is a signal peptide. Residues 23 to 39 (EEERGADDDDGEEEVKR) constitute a propeptide that is removed on maturation. C62 and C67 are joined by a disulfide.

In terms of tissue distribution, expressed by the skin glands.

It localises to the secreted. Its function is as follows. Antimicrobial peptide. This Odorrana versabilis (Chinese bamboo leaf odorous frog) protein is Ranatuerin-2Vb.